Here is a 323-residue protein sequence, read N- to C-terminus: Lipoyl synthase (323 aa).

[4Fe-4S] cluster-binding residues include Cys-61, Cys-66, Cys-72, Cys-87, Cys-91, Cys-94, and Ser-300. The Radical SAM core domain occupies 73–289; that stretch reads WDKKHATFMI…ETVAYSKGFL (217 aa).

It belongs to the radical SAM superfamily. Lipoyl synthase family. The cofactor is [4Fe-4S] cluster.

The protein localises to the cytoplasm. The enzyme catalyses [[Fe-S] cluster scaffold protein carrying a second [4Fe-4S](2+) cluster] + N(6)-octanoyl-L-lysyl-[protein] + 2 oxidized [2Fe-2S]-[ferredoxin] + 2 S-adenosyl-L-methionine + 4 H(+) = [[Fe-S] cluster scaffold protein] + N(6)-[(R)-dihydrolipoyl]-L-lysyl-[protein] + 4 Fe(3+) + 2 hydrogen sulfide + 2 5'-deoxyadenosine + 2 L-methionine + 2 reduced [2Fe-2S]-[ferredoxin]. It functions in the pathway protein modification; protein lipoylation via endogenous pathway; protein N(6)-(lipoyl)lysine from octanoyl-[acyl-carrier-protein]: step 2/2. In terms of biological role, catalyzes the radical-mediated insertion of two sulfur atoms into the C-6 and C-8 positions of the octanoyl moiety bound to the lipoyl domains of lipoate-dependent enzymes, thereby converting the octanoylated domains into lipoylated derivatives. This is Lipoyl synthase from Rhizobium etli (strain CIAT 652).